The sequence spans 600 residues: UvrABC system protein C (600 aa).

Residues 15-100 (NSAGVYQYFN…IKQLHPKYNI (86 aa)) enclose the GIY-YIG domain. One can recognise a UVR domain in the interval 203 to 238 (SILIKNLEKQMLVLAQNENYEEAAKVRDQIVTIKDL).

It belongs to the UvrC family. In terms of assembly, interacts with UvrB in an incision complex.

The protein resides in the cytoplasm. In terms of biological role, the UvrABC repair system catalyzes the recognition and processing of DNA lesions. UvrC both incises the 5' and 3' sides of the lesion. The N-terminal half is responsible for the 3' incision and the C-terminal half is responsible for the 5' incision. In Campylobacter jejuni subsp. jejuni serotype O:6 (strain 81116 / NCTC 11828), this protein is UvrABC system protein C.